We begin with the raw amino-acid sequence, 33 residues long: Mu-theraphotoxin-Osp1b (33 aa).

3 disulfides stabilise this stretch: Cys-2/Cys-17, Cys-9/Cys-22, and Cys-16/Cys-29.

Belongs to the neurotoxin 10 (Hwtx-1) family. 22 (Htx-4) subfamily. In terms of tissue distribution, expressed by the venom gland.

Its subcellular location is the secreted. Voltage-gated sodium channel Nav1.7/SCN9A inhibitor. The protein is Mu-theraphotoxin-Osp1b of Orphnaecus sp. (strain Maanghit-Cave/Philippines) (Tarantula spider).